A 101-amino-acid chain; its full sequence is Small ribosomal subunit protein uS14 (101 aa).

Belongs to the universal ribosomal protein uS14 family. In terms of assembly, part of the 30S ribosomal subunit. Contacts proteins S3 and S10.

Binds 16S rRNA, required for the assembly of 30S particles and may also be responsible for determining the conformation of the 16S rRNA at the A site. The chain is Small ribosomal subunit protein uS14 from Cupriavidus necator (strain ATCC 17699 / DSM 428 / KCTC 22496 / NCIMB 10442 / H16 / Stanier 337) (Ralstonia eutropha).